We begin with the raw amino-acid sequence, 166 residues long: Sec-independent protein translocase protein TatB (166 aa).

Residues 1–21 form a helical membrane-spanning segment; sequence MIDIAFSKLAIIGVAALVFIG. A disordered region spans residues 85–146; it reads DSSLHSAWDE…SGQKSRVISG (62 aa).

This sequence belongs to the TatB family. As to quaternary structure, the Tat system comprises two distinct complexes: a TatABC complex, containing multiple copies of TatA, TatB and TatC subunits, and a separate TatA complex, containing only TatA subunits. Substrates initially bind to the TatABC complex, which probably triggers association of the separate TatA complex to form the active translocon.

Its subcellular location is the cell inner membrane. Its function is as follows. Part of the twin-arginine translocation (Tat) system that transports large folded proteins containing a characteristic twin-arginine motif in their signal peptide across membranes. Together with TatC, TatB is part of a receptor directly interacting with Tat signal peptides. TatB may form an oligomeric binding site that transiently accommodates folded Tat precursor proteins before their translocation. The chain is Sec-independent protein translocase protein TatB from Herminiimonas arsenicoxydans.